A 167-amino-acid chain; its full sequence is Shikimate kinase (167 aa).

8–15 (GFMGSGKT) serves as a coordination point for ATP.

It belongs to the shikimate kinase family.

It localises to the cytoplasm. The enzyme catalyses shikimate + ATP = 3-phosphoshikimate + ADP + H(+). It functions in the pathway metabolic intermediate biosynthesis; chorismate biosynthesis; chorismate from D-erythrose 4-phosphate and phosphoenolpyruvate: step 5/7. This chain is Shikimate kinase, found in Helicobacter hepaticus (strain ATCC 51449 / 3B1).